We begin with the raw amino-acid sequence, 175 residues long: NADH-ubiquinone oxidoreductase chain 6 (175 aa).

Helical transmembrane passes span 1–21, 25–45, 47–67, 88–108, and 149–169; these read MMIY…VGFS, SPIY…GIVM, FGGS…MLVV, TVLS…LYMF, and YGVW…LVVL.

It belongs to the complex I subunit 6 family. As to quaternary structure, core subunit of respiratory chain NADH dehydrogenase (Complex I) which is composed of 45 different subunits.

It is found in the mitochondrion inner membrane. It carries out the reaction a ubiquinone + NADH + 5 H(+)(in) = a ubiquinol + NAD(+) + 4 H(+)(out). Core subunit of the mitochondrial membrane respiratory chain NADH dehydrogenase (Complex I) which catalyzes electron transfer from NADH through the respiratory chain, using ubiquinone as an electron acceptor. Essential for the catalytic activity and assembly of complex I. This Rhinoceros unicornis (Greater Indian rhinoceros) protein is NADH-ubiquinone oxidoreductase chain 6 (MT-ND6).